The chain runs to 301 residues: Peptidyl-prolyl cis-trans isomerase E (301 aa).

Positions 5–83 (KRVLYVGGLA…GRTIRVNLAK (79 aa)) constitute an RRM domain. Residues serine 91, serine 97, and serine 119 each carry the phosphoserine modification. The interval 107 to 140 (GKTLEENKEEEGSEPPKAETQEGEPAAKKARSNP) is disordered. The PPIase cyclophilin-type domain maps to 143–299 (YMDIKIGNKP…QKVIIADCGE (157 aa)).

Belongs to the cyclophilin-type PPIase family. PPIase E subfamily. As to quaternary structure, identified in the spliceosome C complex. Component of the XAB2 complex, a multimeric protein complex composed of XAB2, PRPF19, AQR, ZNF830, ISY1, and PPIE. Identified in a pentameric intron-binding (IB) complex composed of AQR, XAB2, ISY1, ZNF830 and PPIE that is incorporated into the spliceosome as a preassembled complex. The IB complex does not contain PRPF19. Interacts (via RNA-binding domain) with KMT2A (via the third PHD-type zinc-finger).

Its subcellular location is the nucleus. It catalyses the reaction [protein]-peptidylproline (omega=180) = [protein]-peptidylproline (omega=0). Its function is as follows. Involved in pre-mRNA splicing as component of the spliceosome. Combines RNA-binding and PPIase activities. Binds mRNA and has a preference for single-stranded RNA molecules with poly-A and poly-U stretches, suggesting it binds to the poly(A)-region in the 3'-UTR of mRNA molecules. Catalyzes the cis-trans isomerization of proline imidic peptide bonds in proteins. Inhibits KMT2A activity; this requires proline isomerase activity. The polypeptide is Peptidyl-prolyl cis-trans isomerase E (PPIE) (Pongo abelii (Sumatran orangutan)).